The primary structure comprises 707 residues: Polyribonucleotide nucleotidyltransferase (707 aa).

Mg(2+) is bound by residues Asp-487 and Asp-493. The 60-residue stretch at 554–613 (PKILTMNINPDKIRDVIGPSGKQINKIIEDTGVKIDIEQDGTIFISSTDESSNQKAKKII) folds into the KH domain. One can recognise an S1 motif domain in the interval 623–691 (GQLYLGKVKR…KQGRVNLSRK (69 aa)).

The protein belongs to the polyribonucleotide nucleotidyltransferase family. Mg(2+) is required as a cofactor.

It localises to the cytoplasm. The enzyme catalyses RNA(n+1) + phosphate = RNA(n) + a ribonucleoside 5'-diphosphate. In terms of biological role, involved in mRNA degradation. Catalyzes the phosphorolysis of single-stranded polyribonucleotides processively in the 3'- to 5'-direction. This Bacillus velezensis (strain DSM 23117 / BGSC 10A6 / LMG 26770 / FZB42) (Bacillus amyloliquefaciens subsp. plantarum) protein is Polyribonucleotide nucleotidyltransferase.